We begin with the raw amino-acid sequence, 289 residues long: Somatostatin-like receptor F_48D10.1 (289 aa).

The Extracellular segment spans residues 1–57; that stretch reads MEPLDQTPGFPLSPEPNYWYETTPSLLLVSYPHLLDISSNQSTQSVPFQGSSALLTA. Asn-40 is a glycosylation site (N-linked (GlcNAc...) asparagine). Residues 58 to 79 traverse the membrane as a helical segment; the sequence is VIYITVFVVGLTGNTLAIYVVL. At 80-89 the chain is on the cytoplasmic side; sequence RYAGMKTVTN. Residues 90–110 form a helical membrane-spanning segment; sequence IYILNLAVADELYIVGLPFLA. Over 111-126 the chain is Extracellular; the sequence is TQNVLSYWPFGSFLCR. Cysteines 125 and 221 form a disulfide. Residues 127–148 form a helical membrane-spanning segment; it reads VVMTADSMNQFTSIFCLTVMSI. At 149–170 the chain is on the cytoplasmic side; it reads DRYLAVVHPIRSTKWRHPRVAK. The helical transmembrane segment at 171–191 threads the bilayer; the sequence is VVSAAVWAVSFVVVLPVVIFS. The Extracellular segment spans residues 192–240; sequence DVQVRPSRPLQVGTSSKCLVKRVQETFNSCNMIWPEPKNVWSTAFILYT. The helical transmembrane segment at 241 to 261 threads the bilayer; the sequence is AMVGFFGPLLIICLCYLLIVI. Over 262 to 289 the chain is Cytoplasmic; it reads KVRHRMSAAQVGAVVSTCPLNICCLSRR.

This sequence belongs to the G-protein coupled receptor 1 family.

The protein resides in the cell membrane. The protein is Somatostatin-like receptor F_48D10.1 of Takifugu rubripes (Japanese pufferfish).